We begin with the raw amino-acid sequence, 183 residues long: ATP synthase subunit delta (183 aa).

It belongs to the ATPase delta chain family. As to quaternary structure, F-type ATPases have 2 components, F(1) - the catalytic core - and F(0) - the membrane proton channel. F(1) has five subunits: alpha(3), beta(3), gamma(1), delta(1), epsilon(1). F(0) has three main subunits: a(1), b(2) and c(10-14). The alpha and beta chains form an alternating ring which encloses part of the gamma chain. F(1) is attached to F(0) by a central stalk formed by the gamma and epsilon chains, while a peripheral stalk is formed by the delta and b chains.

The protein resides in the cell membrane. Functionally, f(1)F(0) ATP synthase produces ATP from ADP in the presence of a proton or sodium gradient. F-type ATPases consist of two structural domains, F(1) containing the extramembraneous catalytic core and F(0) containing the membrane proton channel, linked together by a central stalk and a peripheral stalk. During catalysis, ATP synthesis in the catalytic domain of F(1) is coupled via a rotary mechanism of the central stalk subunits to proton translocation. In terms of biological role, this protein is part of the stalk that links CF(0) to CF(1). It either transmits conformational changes from CF(0) to CF(1) or is implicated in proton conduction. This is ATP synthase subunit delta from Mesoplasma florum (strain ATCC 33453 / NBRC 100688 / NCTC 11704 / L1) (Acholeplasma florum).